A 278-amino-acid polypeptide reads, in one-letter code: 4-deoxy-L-threo-5-hexosulose-uronate ketol-isomerase (278 aa).

4 residues coordinate Zn(2+): H196, H198, E203, and H245.

Belongs to the KduI family. Homohexamer. Requires Zn(2+) as cofactor.

The catalysed reaction is 5-dehydro-4-deoxy-D-glucuronate = 3-deoxy-D-glycero-2,5-hexodiulosonate. It participates in glycan metabolism; pectin degradation; 2-dehydro-3-deoxy-D-gluconate from pectin: step 4/5. In terms of biological role, catalyzes the isomerization of 5-dehydro-4-deoxy-D-glucuronate to 3-deoxy-D-glycero-2,5-hexodiulosonate. The protein is 4-deoxy-L-threo-5-hexosulose-uronate ketol-isomerase of Escherichia coli (strain 55989 / EAEC).